Here is a 350-residue protein sequence, read N- to C-terminus: tRNA uridine(34) hydroxylase (350 aa).

The Rhodanese domain occupies 146–240; the sequence is DDPDALFIDM…YARKAREQGL (95 aa). Catalysis depends on Cys-200, which acts as the Cysteine persulfide intermediate.

The protein belongs to the TrhO family.

The catalysed reaction is uridine(34) in tRNA + AH2 + O2 = 5-hydroxyuridine(34) in tRNA + A + H2O. Functionally, catalyzes oxygen-dependent 5-hydroxyuridine (ho5U) modification at position 34 in tRNAs, the first step in 5-carboxymethoxyuridine (cmo5U) biosynthesis. May be part of an alternate pathway, which is able to bypass cmo5U biogenesis in a subset of tRNAs under aerobic conditions. The polypeptide is tRNA uridine(34) hydroxylase (Escherichia coli O81 (strain ED1a)).